We begin with the raw amino-acid sequence, 87 residues long: Small ribosomal subunit protein uS12m (87 aa).

Belongs to the universal ribosomal protein uS12 family.

The protein resides in the mitochondrion matrix. Its subcellular location is the kinetoplast. Functionally, protein S12 is involved in the translation initiation step. In Trypanoplasma borreli, this protein is Small ribosomal subunit protein uS12m (RPS12).